Here is a 142-residue protein sequence, read N- to C-terminus: Large-conductance mechanosensitive channel (142 aa).

The next 2 helical transmembrane spans lie at 14 to 34 and 82 to 102; these read VMDLAVGVIIGAAFSKIVDSV and GNFITVFINFLILAWIIFLLI.

Belongs to the MscL family. In terms of assembly, homopentamer.

It localises to the cell inner membrane. Its function is as follows. Channel that opens in response to stretch forces in the membrane lipid bilayer. May participate in the regulation of osmotic pressure changes within the cell. In Sinorhizobium medicae (strain WSM419) (Ensifer medicae), this protein is Large-conductance mechanosensitive channel.